Reading from the N-terminus, the 356-residue chain is Alternative oxidase, mitochondrial (356 aa).

Residues V152–L172 traverse the membrane as a helical segment. Fe cation-binding residues include E159, E198, and H201. A helical membrane pass occupies residues L217 to S237. 3 residues coordinate Fe cation: E249, E304, and H307. The segment at Y330–I356 is disordered.

This sequence belongs to the alternative oxidase family. Requires Fe cation as cofactor.

It is found in the mitochondrion inner membrane. Its function is as follows. Catalyzes cyanide-resistant oxygen consumption. May increase respiration when the cytochrome respiratory pathway is restricted, or in response to low temperatures. In Ajellomyces capsulatus (Darling's disease fungus), this protein is Alternative oxidase, mitochondrial (AOX1).